The sequence spans 431 residues: MLTIKNWQLLSDNDKRRCLSRPRDNSAIKENVLEIINQVQLSGDKALYDLTKRFDRVNLQYLQISQEKIRQASIPQNALIAIKQAIETISSYHQFLLPENTEISTASGITIRNVYRPIQKVGLYVPGGNKTPLVSSLLMQAIPAKVAGCPIKVLCTPPDAEGEINEHILVAARLCGIDTIYAIGGAQAIAAMAYGTESVIKVDKIFGPGNSYVTQAKTLVAIDADGAAIDMPAGPSEVMILADTEANPEFIAADLLAQAEHGPDSQVILICDECELANQVNQQLEIQMSYLSRIEFIKQSLTNSRIIICSNQSEQLDIINSYAPEHLIINRKNPEPWVEKIVAAGTVFLGSWAAETMGDYVTGSNHVLPTSGFARNHSGLSTLDFMTRFTVQAINQEAIRNLGPAAMTLAELEGLDAHANAVQIRLNTLGD.

NAD(+) is bound by residues Tyr124, Gln187, and Asn210. Substrate contacts are provided by Ser236, Gln258, and His261. Zn(2+) is bound by residues Gln258 and His261. Active-site proton acceptor residues include Glu325 and His326. Residues His326, Asp359, Glu413, and His418 each contribute to the substrate site. Position 359 (Asp359) interacts with Zn(2+). His418 contributes to the Zn(2+) binding site.

The protein belongs to the histidinol dehydrogenase family. Zn(2+) is required as a cofactor.

The enzyme catalyses L-histidinol + 2 NAD(+) + H2O = L-histidine + 2 NADH + 3 H(+). It participates in amino-acid biosynthesis; L-histidine biosynthesis; L-histidine from 5-phospho-alpha-D-ribose 1-diphosphate: step 9/9. Catalyzes the sequential NAD-dependent oxidations of L-histidinol to L-histidinaldehyde and then to L-histidine. This Legionella pneumophila (strain Paris) protein is Histidinol dehydrogenase.